Consider the following 274-residue polypeptide: Sulfur carrier protein FdhD (274 aa).

The active-site Cysteine persulfide intermediate is Cys120.

The protein belongs to the FdhD family.

The protein localises to the cytoplasm. In terms of biological role, required for formate dehydrogenase (FDH) activity. Acts as a sulfur carrier protein that transfers sulfur from IscS to the molybdenum cofactor prior to its insertion into FDH. This is Sulfur carrier protein FdhD from Burkholderia mallei (strain ATCC 23344).